We begin with the raw amino-acid sequence, 285 residues long: NADPH-dependent 7-cyano-7-deazaguanine reductase (285 aa).

Residue 80 to 82 coordinates substrate; it reads VES. Position 82-83 (82-83) interacts with NADPH; the sequence is SK. The Thioimide intermediate role is filled by C191. The Proton donor role is filled by D198. Position 231–232 (231–232) interacts with substrate; sequence HE. 260–261 contributes to the NADPH binding site; the sequence is RG.

It belongs to the GTP cyclohydrolase I family. QueF type 2 subfamily. As to quaternary structure, homodimer.

It localises to the cytoplasm. The enzyme catalyses 7-aminomethyl-7-carbaguanine + 2 NADP(+) = 7-cyano-7-deazaguanine + 2 NADPH + 3 H(+). It participates in tRNA modification; tRNA-queuosine biosynthesis. In terms of biological role, catalyzes the NADPH-dependent reduction of 7-cyano-7-deazaguanine (preQ0) to 7-aminomethyl-7-deazaguanine (preQ1). This Psychrobacter arcticus (strain DSM 17307 / VKM B-2377 / 273-4) protein is NADPH-dependent 7-cyano-7-deazaguanine reductase.